A 116-amino-acid chain; its full sequence is Large ribosomal subunit protein bL19 (116 aa).

It belongs to the bacterial ribosomal protein bL19 family.

Functionally, this protein is located at the 30S-50S ribosomal subunit interface and may play a role in the structure and function of the aminoacyl-tRNA binding site. In Azotobacter vinelandii (strain DJ / ATCC BAA-1303), this protein is Large ribosomal subunit protein bL19.